Consider the following 2380-residue polypeptide: Probable polyketide synthase 25 (2380 aa).

The span at 1–18 (MDNSYLNNPQFDINNGNK) shows a compositional bias: polar residues. A disordered region spans residues 1–29 (MDNSYLNNPQFDINNGNKEVTDDDNNKNN). In terms of domain architecture, Ketosynthase family 3 (KS3) spans 31-457 (DNLVAIVGVG…GSNCCLVLSQ (427 aa)). Active-site for beta-ketoacyl synthase activity residues include Cys198, His340, and His380. The acyl/malonyl transferase stretch occupies residues 649-682 (GIKASFMLGHSLGEVTTAYCSGMIDIDQLCYLIY). Ser659 acts as the For acyl/malonyl transferase activity in catalysis. The N-terminal hotdog fold stretch occupies residues 948–1070 (ISILGNSMQD…ANFQLYNNGK (123 aa)). In terms of domain architecture, PKS/mFAS DH spans 948–1234 (ISILGNSMQD…CTSLTPVKDP (287 aa)). His982 functions as the Proton acceptor; for dehydratase activity in the catalytic mechanism. The segment at 1085-1234 (NLSSIPWDKF…CTSLTPVKDP (150 aa)) is C-terminal hotdog fold. Asp1148 functions as the Proton donor; for dehydratase activity in the catalytic mechanism. The Carrier domain maps to 2299–2376 (KNSTNIKDKF…MVCQIINDNF (78 aa)). An O-(pantetheine 4'-phosphoryl)serine modification is found at Ser2336.

Requires pantetheine 4'-phosphate as cofactor.

Functionally, probable polyketide synthase. The protein is Probable polyketide synthase 25 (pks25) of Dictyostelium discoideum (Social amoeba).